We begin with the raw amino-acid sequence, 304 residues long: Small glutamine-rich tetratricopeptide repeat-containing protein beta (304 aa).

TPR repeat units follow at residues 15 to 49 (LREQ…SPED), 85 to 118 (ADQL…DPNN), 120 to 152 (VYYC…DSKY), and 153 to 186 (SKAY…DPEN). Lys131 bears the N6-acetyllysine mark. A phosphoserine mark is found at Ser293, Ser295, and Ser297.

Belongs to the SGT family. As to quaternary structure, homooligomerize.

Its function is as follows. Co-chaperone that binds directly to HSC70 and HSP70 and regulates their ATPase activity. In Mus musculus (Mouse), this protein is Small glutamine-rich tetratricopeptide repeat-containing protein beta (Sgtb).